The chain runs to 54 residues: Ovomucoid (54 aa).

One can recognise a Kazal-like domain in the interval 4–54; sequence VDCSEYPKPACTLEHRPLCGSDNKTYGNKCNFCNAVVESNGTLTLSHFGKC. 3 disulfides stabilise this stretch: cysteine 6/cysteine 36, cysteine 14/cysteine 33, and cysteine 22/cysteine 54. Asparagine 43 is a glycosylation site (N-linked (GlcNAc...) asparagine).

Its subcellular location is the secreted. In Pavo muticus (Green peafowl), this protein is Ovomucoid.